Reading from the N-terminus, the 822-residue chain is Fibroblast growth factor receptor 4 (822 aa).

The N-terminal stretch at 1–35 (MGVQKDSRDIRWNRTTRPLALLLCGLLAFSALSCA) is a signal peptide. 3 N-linked (GlcNAc...) asparagine glycosylation sites follow: N13, N72, and N125. Topologically, residues 36–388 (RTLPEGRKAN…AEGPETRYTD (353 aa)) are extracellular. Ig-like C2-type domains are found at residues 39–129 (PEGR…FTIS), 157–259 (PPYS…YLLD), and 268–368 (PILQ…AWLT). A disulfide bridge links C69 with C114. A disordered region spans residues 136 to 166 (SGDDDDEDHGREDSAGDMGEDPPYSTSYRAP). A disulfide bond links C191 and C243. N-linked (GlcNAc...) asparagine glycosylation is found at N240, N277, N309, N330, and N341. C290 and C352 are joined by a disulfide. Residues 389–409 (IIIYTSGSLALLMAAVIVVLC) form a helical membrane-spanning segment. At 410 to 822 (RMQLPPTKTH…HHTTTSMVGT (413 aa)) the chain is on the cytoplasmic side. The region spanning 486 to 774 (LVLGKPLGEG…ILATVAEEYL (289 aa)) is the Protein kinase domain. ATP contacts are provided by residues 492–500 (LGEGCFGQV) and K522. Catalysis depends on D631, which acts as the Proton acceptor. 3 positions are modified to phosphotyrosine; by autocatalysis: Y661, Y662, and Y773.

This sequence belongs to the protein kinase superfamily. Tyr protein kinase family. Fibroblast growth factor receptor subfamily. Ubiquitinated. Subject to proteasomal degradation when not fully glycosylated. Post-translationally, autophosphorylated. Binding of FGF family members together with heparan sulfate proteoglycan or heparin promotes receptor dimerization and autophosphorylation on tyrosine residues. Autophosphorylation occurs in trans between the two FGFR molecules present in the dimer.

Its subcellular location is the cell membrane. It is found in the endosome. The protein localises to the endoplasmic reticulum. It catalyses the reaction L-tyrosyl-[protein] + ATP = O-phospho-L-tyrosyl-[protein] + ADP + H(+). Its activity is regulated as follows. Present in an inactive conformation in the absence of bound ligand. Ligand binding leads to dimerization and activation by autophosphorylation on tyrosine residues. Its function is as follows. Tyrosine-protein kinase that acts as a cell-surface receptor for fibroblast growth factors and plays a role in the regulation of cell proliferation, differentiation and migration, and in regulation of lipid metabolism, bile acid biosynthesis, glucose uptake, vitamin D metabolism and phosphate homeostasis. Required for normal down-regulation of the expression of CYP7A1, the rate-limiting enzyme in bile acid synthesis, in response to FGF19. Phosphorylates PLCG1 and FRS2. Ligand binding leads to the activation of several signaling cascades. Activation of PLCG1 leads to the production of the cellular signaling molecules diacylglycerol and inositol 1,4,5-trisphosphate. Phosphorylation of FRS2 triggers recruitment of GRB2, GAB1, PIK3R1 and SOS1, and mediates activation of RAS, MAPK1/ERK2, MAPK3/ERK1 and the MAP kinase signaling pathway, as well as of the AKT1 signaling pathway. The chain is Fibroblast growth factor receptor 4 (FGFR4) from Pleurodeles waltl (Iberian ribbed newt).